The sequence spans 291 residues: U3 small nucleolar ribonucleoprotein protein IMP4 (291 aa).

Residues 83 to 264 (PKVMITTSRD…LYMIRLGTLE (182 aa)) form the Brix domain.

Part of the small subunit (SSU) processome, composed of more than 70 proteins and the RNA chaperone small nucleolar RNA (snoRNA) U3. Component of a heterotrimeric complex containing IMP3, IMP4 and MPHOSPH10. Interacts with MPHOSPH10.

It is found in the nucleus. Its subcellular location is the nucleolus. In terms of biological role, component of the 60-80S U3 small nucleolar ribonucleoprotein (U3 snoRNP). Required for the early cleavages during pre-18S ribosomal RNA processing. Part of the small subunit (SSU) processome, first precursor of the small eukaryotic ribosomal subunit. During the assembly of the SSU processome in the nucleolus, many ribosome biogenesis factors, an RNA chaperone and ribosomal proteins associate with the nascent pre-rRNA and work in concert to generate RNA folding, modifications, rearrangements and cleavage as well as targeted degradation of pre-ribosomal RNA by the RNA exosome. The protein is U3 small nucleolar ribonucleoprotein protein IMP4 (IMP4) of Pongo abelii (Sumatran orangutan).